The primary structure comprises 156 residues: Fibroblast growth factor 2 (156 aa).

Residues 1–9 constitute a propeptide that is removed on maturation; it reads MAAGSITTL. Residue Asn-37 participates in heparin binding. A Phosphotyrosine; by TEC modification is found at Tyr-83. A Glycyl lysine isopeptide (Lys-Gly) (interchain with G-Cter in SUMO1) cross-link involves residue Lys-96. Positions 129–145 are heparin-binding; it reads KRTGQYKLGSKTGPGQK.

Belongs to the heparin-binding growth factors family. As to quaternary structure, monomer. Homodimer. Interacts with FGFR1, FGFR2, FGFR3 and FGFR4. Affinity between fibroblast growth factors (FGFs) and their receptors is increased by heparan sulfate glycosaminoglycans that function as coreceptors. Interacts with CSPG4, FGFBP1 and TEC. Found in a complex with FGFBP1, FGF1 and FGF2. Interacts with FGFBP3. Interacts with integrin ITGAV:ITGB3; the interaction is required for FGF2 signaling. Interacts with SNORC (via the extracellular domain). Interacts with glypican GPC3. In terms of processing, phosphorylation at Tyr-83 regulates FGF2 unconventional secretion.

It is found in the secreted. The protein resides in the nucleus. In terms of biological role, acts as a ligand for FGFR1, FGFR2, FGFR3 and FGFR4. Also acts as an integrin ligand which is required for FGF2 signaling. Binds to integrin ITGAV:ITGB3. Plays an important role in the regulation of cell survival, cell division, cell differentiation and cell migration. Functions as a potent mitogen in vitro. Can induce angiogenesis. Mediates phosphorylation of ERK1/2 and thereby promotes retinal lens fiber differentiation. The protein is Fibroblast growth factor 2 (FGF2) of Monodelphis domestica (Gray short-tailed opossum).